The primary structure comprises 370 residues: MTKQSVVVPEVAVPMPPNSAPLLPYPPPRAAPGVAVRKKYLQAQLDLGAGLPLINGWVESMRASSPTHAKAAAALAAAGAVDDERAAWMVRHPSALSKFEQIVAASKGKKIVMFLDYDGTLSPIVDDPDSAFMSDTMRRAVRSVAKHFPTAIVSGRCRDKVFEFVKLAELYYAGSHGMDIKGPAKASRHNKAKAKGVLFQPASEFLPMIEQVHDSLIERTKCIPGAKVENNKFCVSVHFRCVDEKSWSTLADIVKAELKDYPKLKLTQGRMVFEIRPTIKWDKGKALEFLLESLGFADCTNVLPVYIGDDRTDEDAFKVLRKRGQGIGILVSKYPKDTNASYSLQEPAEVMEFLLRLVEWERLSRARPKW.

It belongs to the trehalose phosphatase family. A divalent metal cation is required as a cofactor.

The catalysed reaction is alpha,alpha-trehalose 6-phosphate + H2O = alpha,alpha-trehalose + phosphate. It participates in glycan biosynthesis; trehalose biosynthesis. Its function is as follows. Removes the phosphate from trehalose 6-phosphate to produce free trehalose. Trehalose accumulation in plant may improve abiotic stress tolerance. The chain is Probable trehalose-phosphate phosphatase 6 (TPP6) from Oryza sativa subsp. japonica (Rice).